The following is a 617-amino-acid chain: 1-deoxy-D-xylulose-5-phosphate synthase (617 aa).

Thiamine diphosphate-binding positions include histidine 76 and 117–119 (GHS). Aspartate 148 lines the Mg(2+) pocket. Thiamine diphosphate-binding positions include 149 to 150 (GA), asparagine 177, tyrosine 285, and glutamate 366. Asparagine 177 contacts Mg(2+).

The protein belongs to the transketolase family. DXPS subfamily. As to quaternary structure, homodimer. Mg(2+) serves as cofactor. It depends on thiamine diphosphate as a cofactor.

The enzyme catalyses D-glyceraldehyde 3-phosphate + pyruvate + H(+) = 1-deoxy-D-xylulose 5-phosphate + CO2. The protein operates within metabolic intermediate biosynthesis; 1-deoxy-D-xylulose 5-phosphate biosynthesis; 1-deoxy-D-xylulose 5-phosphate from D-glyceraldehyde 3-phosphate and pyruvate: step 1/1. Functionally, catalyzes the acyloin condensation reaction between C atoms 2 and 3 of pyruvate and glyceraldehyde 3-phosphate to yield 1-deoxy-D-xylulose-5-phosphate (DXP). In Histophilus somni (strain 2336) (Haemophilus somnus), this protein is 1-deoxy-D-xylulose-5-phosphate synthase.